Reading from the N-terminus, the 197-residue chain is Large ribosomal subunit protein eL15 (197 aa).

The span at 163 to 172 (GKTSAGRKGR) shows a compositional bias: basic residues. Positions 163-197 (GKTSAGRKGRGMQTRGTGTEKTRPSVRSNLNRSKK) are disordered. The span at 186-197 (PSVRSNLNRSKK) shows a compositional bias: polar residues.

It belongs to the eukaryotic ribosomal protein eL15 family.

In Methanococcoides burtonii (strain DSM 6242 / NBRC 107633 / OCM 468 / ACE-M), this protein is Large ribosomal subunit protein eL15.